Here is a 534-residue protein sequence, read N- to C-terminus: Calcium-dependent protein kinase 29 (534 aa).

The tract at residues M1–P72 is disordered. G2 is lipidated: N-myristoyl glycine. Positions I16 to P27 are enriched in low complexity. Residues N49–S63 show a composition bias toward pro residues. Residues Y85 to M343 enclose the Protein kinase domain. ATP-binding positions include L91 to T99 and K114. The active-site Proton acceptor is D209. S249 is subject to Phosphoserine. An autoinhibitory domain region spans residues I348–I378. EF-hand domains follow at residues E385–K420, L421–L456, E457–G492, and D493–D527. Ca(2+) contacts are provided by D398, D400, S402, T404, E409, D434, D436, S438, T440, E445, D470, D472, S474, E481, D505, D507, D509, R511, and E516.

The protein belongs to the protein kinase superfamily. Ser/Thr protein kinase family. CDPK subfamily.

It localises to the membrane. It carries out the reaction L-seryl-[protein] + ATP = O-phospho-L-seryl-[protein] + ADP + H(+). It catalyses the reaction L-threonyl-[protein] + ATP = O-phospho-L-threonyl-[protein] + ADP + H(+). Activated by calcium. Autophosphorylation may play an important role in the regulation of the kinase activity. May play a role in signal transduction pathways that involve calcium as a second messenger. The protein is Calcium-dependent protein kinase 29 (CPK29) of Arabidopsis thaliana (Mouse-ear cress).